The primary structure comprises 1211 residues: PH domain-containing protein DDB_G0287875 (1211 aa).

The Ras-associating 1 domain occupies 5–90; that stretch reads QKKILKVFDQ…YKFFFLNPNG (86 aa). The segment covering 103-112 has biased composition (polar residues); the sequence is KSQSASTSGS. The interval 103–133 is disordered; it reads KSQSASTSGSAPPKKEPPKPQELQQKQHISK. The PH domain occupies 132–223; the sequence is SKGKSGWLLR…WAQELQATMN (92 aa). 2 consecutive Calponin-homology (CH) domains span residues 277–384 and 392–502; these read TTLV…VGYF and FNMR…LSGQ. 2 disordered regions span residues 520–941 and 973–1110; these read VEPE…TESV and TSAT…PKNT. Residues 527–572 are a coiled coil; that stretch reads SIRDKQLKLMREKKEEEDRLKKEKEEKEKEEKEKLEKESSAAAAAT. Residues 528 to 565 show a composition bias toward basic and acidic residues; the sequence is IRDKQLKLMREKKEEEDRLKKEKEEKEKEEKEKLEKES. Composition is skewed to low complexity over residues 566 to 596, 607 to 646, 655 to 668, and 676 to 691; these read SAAA…PLKK, PPTV…TLTP, KKPA…KPVA, and PSSS…TTPS. Basic and acidic residues predominate over residues 703-729; sequence QLEKEKQDRLEKARLEKEKAEKEEQEF. A coiled-coil region spans residues 703–847; sequence QLEKEKQDRL…ERKHDENDMD (145 aa). The span at 744-753 shows a compositional bias: low complexity; the sequence is LLEQQKQQQE. 2 stretches are compositionally biased toward basic and acidic residues: residues 754–778 and 786–853; these read GQER…QRQI and EARI…KLLE. Positions 862–877 are enriched in polar residues; sequence PTITPPQSLHSSQIIR. Residues 880 to 909 are a coiled coil; sequence IEEDDQTNSELEMFQNEYNRLQDEEEHINS. Composition is skewed to low complexity over residues 914 to 936 and 976 to 1010; these read GSSG…GASS and TTSD…TNNN. Positions 1032 to 1048 are enriched in polar residues; sequence TKEQQSIIDKQTGLVSK. Residues 1048–1076 are a coiled coil; that stretch reads KQSTNNESNEQQQQQQQQQQLQQQQSSQN. A compositionally biased stretch (low complexity) spans 1049-1083; it reads QSTNNESNEQQQQQQQQQQLQQQQSSQNSTTSIST. Residues 1093–1104 show a composition bias toward basic and acidic residues; the sequence is NEEKEKESEPHK. The Ras-associating 2 domain maps to 1112–1196; the sequence is GRVVVRICLE…DRFVFKKNDI (85 aa).

This Dictyostelium discoideum (Social amoeba) protein is PH domain-containing protein DDB_G0287875.